Reading from the N-terminus, the 397-residue chain is Bifunctional enzyme IspD/IspF (397 aa).

Positions Met-1–Ile-236 are 2-C-methyl-D-erythritol 4-phosphate cytidylyltransferase. The 2-C-methyl-D-erythritol 2,4-cyclodiphosphate synthase stretch occupies residues Arg-237–Lys-397. Asp-243 and His-245 together coordinate a divalent metal cation. 4-CDP-2-C-methyl-D-erythritol 2-phosphate-binding positions include Asp-243 to His-245 and His-269 to Ser-270. His-277 serves as a coordination point for a divalent metal cation. 4-CDP-2-C-methyl-D-erythritol 2-phosphate-binding positions include Asp-291–Gly-293, Thr-367–Glu-370, Phe-374, and Arg-377.

This sequence in the N-terminal section; belongs to the IspD/TarI cytidylyltransferase family. IspD subfamily. In the C-terminal section; belongs to the IspF family. The cofactor is a divalent metal cation.

It carries out the reaction 2-C-methyl-D-erythritol 4-phosphate + CTP + H(+) = 4-CDP-2-C-methyl-D-erythritol + diphosphate. It catalyses the reaction 4-CDP-2-C-methyl-D-erythritol 2-phosphate = 2-C-methyl-D-erythritol 2,4-cyclic diphosphate + CMP. Its pathway is isoprenoid biosynthesis; isopentenyl diphosphate biosynthesis via DXP pathway; isopentenyl diphosphate from 1-deoxy-D-xylulose 5-phosphate: step 2/6. The protein operates within isoprenoid biosynthesis; isopentenyl diphosphate biosynthesis via DXP pathway; isopentenyl diphosphate from 1-deoxy-D-xylulose 5-phosphate: step 4/6. In terms of biological role, bifunctional enzyme that catalyzes the formation of 4-diphosphocytidyl-2-C-methyl-D-erythritol from CTP and 2-C-methyl-D-erythritol 4-phosphate (MEP) (IspD), and catalyzes the conversion of 4-diphosphocytidyl-2-C-methyl-D-erythritol 2-phosphate (CDP-ME2P) to 2-C-methyl-D-erythritol 2,4-cyclodiphosphate (ME-CPP) with a corresponding release of cytidine 5-monophosphate (CMP) (IspF). This chain is Bifunctional enzyme IspD/IspF, found in Bartonella bacilliformis (strain ATCC 35685 / KC583 / Herrer 020/F12,63).